A 1024-amino-acid polypeptide reads, in one-letter code: Gamma-tubulin complex component 5 (1024 aa).

Disordered regions lie at residues 155–203 (IGPY…LDPC) and 521–545 (TENE…SSRQ). Residues 189–203 (TPLEEQDQNRKLDPC) show a composition bias toward basic and acidic residues. Low complexity predominate over residues 531 to 543 (ASASSGSDQGPSS).

It belongs to the TUBGCP family. As to quaternary structure, component of the gamma-tubulin ring complex (gTuRC) consisting of TUBGCP2, TUBGCP3, TUBGCP4, TUBGCP5 and TUBGCP6 and gamma-tubulin TUBG1 or TUBG2. TUBGCP2, TUBGCP3, TUBGCP4, TUBGCP5 and TUBGCP6 assemble in a 5:5:2:1:1 stoichiometry; each is associated with a gamma-tubulin, thereby arranging 14 gamma-tubulins in a helical manner. Gamma-tubulin at the first position is blocked by TUBGCP3 at the last position, allowing 13 protafilaments to grow into a microtubule. The gTuRC (via TUBGCP3 and TUBGCP6) interacts with ACTB and MZT1; the interactions form a luminal bridge that stabilizes the initial structure during complex assembly. The gTuRC (via TUBGCP2) interacts with MZT2A/MZT2B and CDK5RAP2 (via CM1 motif); the interactions play a role in gTuRC activation. As to expression, widely expressed, with highest levels in heart and skeletal muscle and moderate levels in brain.

The protein resides in the cytoplasm. Its subcellular location is the cytoskeleton. It is found in the microtubule organizing center. The protein localises to the centrosome. Its function is as follows. Component of the gamma-tubulin ring complex (gTuRC) which mediates microtubule nucleation. The gTuRC regulates the minus-end nucleation of alpha-beta tubulin heterodimers that grow into microtubule protafilaments, a critical step in centrosome duplication and spindle formation. This Homo sapiens (Human) protein is Gamma-tubulin complex component 5 (TUBGCP5).